The chain runs to 261 residues: Hydroxylase cctR (261 aa).

A helical transmembrane segment spans residues 38 to 58 (VFVSLLILSNTISFGLLGWIG). Asn95 carries N-linked (GlcNAc...) asparagine glycosylation. Short sequence motifs (HXXHC) lie at residues 146 to 150 (HEIHC) and 176 to 180 (HIAHC).

Belongs to the ustYa family.

It localises to the membrane. It participates in mycotoxin biosynthesis. Functionally, hydroxylase; part of the gene cluster that mediates the biosynthesis of the mycotoxin cyclochlorotine, a hepatotoxic and carcinogenic cyclic chlorinated pentapeptide. Within the pathway, cctR performs the last step by hydroxylating cyclochlorotine to yield hydroxycyclochlorotine. The NRPS cctN initially catalyzes the condensation of L-serine (Ser), Pro, L-2-aminobutyrate (2Abu), Ser, and beta-Phe in this order to produce isocyclotine. After the dichlorination of Pro2 catalyzed by cctP2 to produce isocyclochlorotine, the cctO-mediated transacylation of isocyclochlorotine can furnish cyclochlorotine. The subsequent hydroxylation of cyclochlorotine by cctR yields hydroxycyclochlorotine as the final product. CctP1 probably acts as a phenylalanine aminomutase and provides the uncommon building block beta-Phe. Furthermore, 2Abu can be synthesized from threonine by one of the threonine dehydratases and transaminases localized outside of the cluster. The functions of the remaining proteins encoded by the cluster, cctM and cctT, have not been identified yet. This is Hydroxylase cctR from Talaromyces islandicus (Penicillium islandicum).